Consider the following 89-residue polypeptide: Cell division topological specificity factor (89 aa).

Belongs to the MinE family.

Functionally, prevents the cell division inhibition by proteins MinC and MinD at internal division sites while permitting inhibition at polar sites. This ensures cell division at the proper site by restricting the formation of a division septum at the midpoint of the long axis of the cell. In Edwardsiella ictaluri (strain 93-146), this protein is Cell division topological specificity factor.